A 256-amino-acid polypeptide reads, in one-letter code: uncharacterized protein (256 aa).

A signal peptide spans 1–23 (MKRLNKLVLGIIFLFLVISITAG). The N-palmitoyl cysteine moiety is linked to residue C24. Residue C24 is the site of S-diacylglycerol cysteine attachment.

Belongs to the staphylococcal tandem lipoprotein family.

The protein resides in the cell membrane. This is an uncharacterized protein from Staphylococcus aureus (strain COL).